The primary structure comprises 3461 residues: Reelin (3461 aa).

The signal sequence occupies residues 1–26 (MERGCWAPRALVLAVLLLLATLRARA). The Reelin domain maps to 27 to 191 (ATGYYPRFSP…GAPTEATAYS (165 aa)). A disulfide bridge connects residues C41 and C127. N-linked (GlcNAc...) asparagine glycosylation is present at N141. A disulfide bridge connects residues C155 and C179. 3 N-linked (GlcNAc...) asparagine glycosylation sites follow: N258, N290, and N306. C540 and C581 are joined by a disulfide. The BNR 1 repeat unit spans residues 593 to 604 (EFSTNHGRSWSL). Cysteines 609 and 614 form a disulfide. N629 carries an N-linked (GlcNAc...) asparagine glycan. The region spanning 671-702 (IGPSCLKFCSGRGQCTRHGCKCDPGFSGPACE) is the EGF-like 1 domain. 2 disulfides stabilise this stretch: C675–C685 and C692–C701. The BNR 2 repeat unit spans residues 799–810 (HYSYDNGITWKL). C895 and C937 form a disulfide bridge. The stretch at 952-963 (EYSANHGLTWHL) is one BNR 3 repeat. Intrachain disulfides connect C968/C975, C1034/C1044, and C1051/C1060. One can recognise an EGF-like 2 domain in the interval 1030 to 1061 (IGQQCPNMCSGHGSCDHGVCRCDQGYQGTECH). One copy of the BNR 4 repeat lies at 1157 to 1168 (QYSNNGGIQWHL). An N-linked (GlcNAc...) asparagine glycan is attached at N1267. A BNR 5 repeat occupies 1323–1334 (QYSHDAGMSWFL). Disulfide bonds link C1339/C1348, C1413/C1423, C1417/C1428, and C1430/C1441. Residues 1409–1442 (ISEPCPSYCSGHGDCISGVCFCDLGYTAAQGTCV) form the EGF-like 3 domain. N-linked (GlcNAc...) asparagine glycosylation occurs at N1447. C1475 and C1522 are disulfide-bonded. Residues 1535-1546 (QYSNDNGILWHL) form a BNR 6 repeat. The N-linked (GlcNAc...) asparagine glycan is linked to N1600. An intrachain disulfide couples C1633 to C1673. The stretch at 1686–1697 (QYSLNNGKDWQL) is one BNR 7 repeat. C1702 and C1709 are joined by a disulfide. N-linked (GlcNAc...) asparagine glycosylation is present at N1750. An EGF-like 4 domain is found at 1765–1796 (LASGCPWMCSGRGICDSGRCVCDRGFGGPFCV). Residues 1884-1895 (QFSVSGGVTWHL) form a BNR 8 repeat. N1921 carries N-linked (GlcNAc...) asparagine glycosylation. A disulfide bridge connects residues C1983 and C2030. The BNR 9 repeat unit spans residues 2043-2054 (EFSRDFGATWHL). Residues C2059 and C2070 are joined by a disulfide bond. Zn(2+) contacts are provided by H2061 and H2074. In terms of domain architecture, EGF-like 5 spans 2129–2161 (IGPQCEEMCYGHGSCINGTKCICDPGYSGPTCK). 3 cysteine pairs are disulfide-bonded: C2133/C2143, C2137/C2149, and C2151/C2160. N2145 carries N-linked (GlcNAc...) asparagine glycosylation. A Zn(2+)-binding site is contributed by E2179. C2195 and C2235 are oxidised to a cystine. The BNR 10 repeat unit spans residues 2250-2261 (QYSLNGGLSWSL). E2264 is a binding site for Zn(2+). Residues N2269 and N2317 are each glycosylated (N-linked (GlcNAc...) asparagine). 6 disulfides stabilise this stretch: C2348-C2387, C2393-C2559, C2482-C2492, C2486-C2497, C2499-C2508, and C2544-C2584. Zn(2+) is bound by residues E2397, E2399, and H2460. One copy of the BNR 11 repeat lies at 2399–2410 (EYSVDLGLSWHP). The EGF-like 6 domain occupies 2478 to 2509 (IGDGCLDMCSGHGRCVQGSCVCDEQWGGLYCD). An N-linked (GlcNAc...) asparagine glycan is attached at N2569. BNR repeat units lie at residues 2598–2609 (EYSVNGGITWNL) and 2778–2789 (QFSTDFGVSWSY). Residues C2794 and C2801 are joined by a disulfide bond. The region spanning 2853–2884 (LGPGCLDNCGGHGDCLKEQCICDPGYSGPNCY) is the EGF-like 7 domain. C2919 and C2966 are disulfide-bonded. An N-linked (GlcNAc...) asparagine glycan is attached at N2962. The stretch at 2979-2990 (DFSTDGGITWTL) is one BNR 14 repeat. N-linked (GlcNAc...) asparagine glycans are attached at residues N3016 and N3073. A BNR 15 repeat occupies 3143–3155 (EYTKDARSDSWQL). Cysteines 3160 and 3170 form a disulfide. N-linked (GlcNAc...) asparagine glycosylation is present at N3185. The 33-residue stretch at 3228–3260 (IGEACPKLCSGHGYCTTGAVCICDESFQGDDCS) folds into the EGF-like 8 domain. 4 cysteine pairs are disulfide-bonded: C3232/C3242, C3236/C3248, C3250/C3259, and C3296/C3346. One copy of the BNR 16 repeat lies at 3363 to 3374 (QYSVNNGITWHV). N-linked (GlcNAc...) asparagine glycosylation is found at N3412 and N3439.

It belongs to the reelin family. In terms of assembly, oligomer of disulfide-linked homodimers. In terms of processing, N-glycosylated and to a lesser extent also O-glycosylated. In terms of tissue distribution, the major isoform 1 is neuron-specific. It is abundantly produced during brain ontogenesis by the Cajal-Retzius cells and other pioneer neurons located in the telencephalic marginal zone and by granule cells of the external granular layer of the cerebellum. Expression is located in deeper layers in the developing hippocampus and olfactory bulb, low levels of expression are also detected in the immature striatum. At early developmental stages, expressed also in hypothalamic differentiation fields, tectum and spinal cord. A moderate to low level of expression occurs in the septal area, striatal fields, habenular nuclei, some thalamic nuclei, particularly the lateral geniculate, the retina and some nuclei of the reticular formation in the central field of the medulla. Very low levels found in liver and kidney. No expression in radial glial cells, cortical plate, Purkinje cells and inferior olivary neurons. The minor isoform 2 is only expressed in non neuronal cells. The minor isoform 3 is found in the same cells as isoform 1, but is almost undetectable in retina and brain stem.

Its subcellular location is the secreted. It is found in the extracellular space. The protein localises to the extracellular matrix. Functionally, extracellular matrix serine protease secreted by pioneer neurons that plays a role in layering of neurons in the cerebral cortex and cerebellum by coordinating cell positioning during neurodevelopment. Regulates microtubule function in neurons and neuronal migration. Binding to the extracellular domains of lipoprotein receptors VLDLR and LRP8/APOER2 induces tyrosine phosphorylation of DAB1 and modulation of TAU phosphorylation. Affects migration of sympathetic preganglionic neurons in the spinal cord, where it seems to act as a barrier to neuronal migration. Enzymatic activity is important for the modulation of cell adhesion. This chain is Reelin (Reln), found in Mus musculus (Mouse).